Reading from the N-terminus, the 1165-residue chain is Leptin receptor (1165 aa).

An N-terminal signal peptide occupies residues 1–21 (MICQKFCVVLLHWEFIYVITA). The Extracellular segment spans residues 22-839 (FNLSYPITPW…QDDIEKHQSD (818 aa)). Asn23, Asn41, Asn56, Asn73, Asn81, and Asn98 each carry an N-linked (GlcNAc...) asparagine glycan. Disulfide bonds link Cys37–Cys90, Cys89–Cys99, Cys131–Cys142, Cys186–Cys196, and Cys188–Cys193. Asn187 is a glycosylation site (N-linked (GlcNAc...) asparagine). N-linked (GlcNAc...) asparagine glycosylation is found at Asn206, Asn276, Asn347, and Asn397. Residues 239–333 (PPLGLHMEIT…TPRVFTTQDV (95 aa)) form the Fibronectin type-III 1 domain. The 99-residue stretch at 331 to 429 (QDVIYFPPKI…HRYAELYVID (99 aa)) folds into the Ig-like domain. 5 disulfides stabilise this stretch: Cys352–Cys412, Cys413–Cys418, Cys436–Cys447, Cys473–Cys528, and Cys488–Cys498. The tract at residues 467–484 (HRSSLYCSDIPSIHPISE) is leptin-binding. 7 N-linked (GlcNAc...) asparagine glycosylation sites follow: Asn516, Asn624, Asn659, Asn688, Asn697, Asn728, and Asn750. 3 consecutive Fibronectin type-III domains span residues 539–634 (PPSS…TVVM), 639–732 (PMRG…LTFS), and 740–833 (IVQS…QDDI). Positions 622 to 626 (WSNWS) match the WSXWS motif motif. Residues 840–862 (AGLYVIVPVIISSSILLLGTLLI) form a helical membrane-spanning segment. At 863 to 1165 (SHQRMKKLFW…MENKMCDLTV (303 aa)) the chain is on the cytoplasmic side. The short motif at 871-879 (FWEDVPNPK) is the Box 1 motif element. Ser882 is modified (phosphoserine). Residues 893-898 (ETFEHL) are required for JAK2 activation. Positions 898–906 (LFIKHTASV) are required for STAT3 phosphorylation. Tyr986 carries the post-translational modification Phosphotyrosine; by JAK2. Phosphotyrosine is present on Tyr1079. Position 1141 is a phosphotyrosine; by JAK2 (Tyr1141).

The protein belongs to the type I cytokine receptor family. Type 2 subfamily. As to quaternary structure, present as a mixture of monomers and dimers. The phosphorylated receptor binds a number of SH2 domain-containing proteins such as JAK2, STAT3, PTPN11, and SOCS3. Interaction with SOCS3 inhibits JAK/STAT signaling and MAPK cascade. On ligand binding, phosphorylated on two conserved C-terminal tyrosine residues (isoform B only) by JAK2. Tyr-986 is required for complete binding and activation of PTPN11, ERK/FOS activation,for interaction with SOCS3 and SOCS3 mediated inhibition of leptin signaling. Phosphorylation on Tyr-1141 is required for STAT3 binding/activation. Phosphorylation of Tyr-1079 has a more accessory role. Isoform A is expressed in fetal liver and in hematopoietic tissues and choroid plexus. In adults highest expression in heart, liver, small intestine, prostate and ovary. Low level in lung and kidney. Isoform B is highly expressed in hypothalamus, but also in skeletal muscle. Detected in fundic and antral epithelial cells of the gastric mucosa. Isoform B and isoform A are expressed by NK cells (at protein level).

It is found in the cell membrane. Its subcellular location is the basolateral cell membrane. The protein localises to the secreted. Its function is as follows. Receptor for hormone LEP/leptin. On ligand binding, mediates LEP central and peripheral effects through the activation of different signaling pathways such as JAK2/STAT3 and MAPK cascade/FOS. In the hypothalamus, LEP acts as an appetite-regulating factor that induces a decrease in food intake and an increase in energy consumption by inducing anorexinogenic factors and suppressing orexigenic neuropeptides, also regulates bone mass and secretion of hypothalamo-pituitary-adrenal hormones. In the periphery, increases basal metabolism, influences reproductive function, regulates pancreatic beta-cell function and insulin secretion, is pro-angiogenic and affects innate and adaptive immunity. Control of energy homeostasis and melanocortin production (stimulation of POMC and full repression of AgRP transcription) is mediated by STAT3 signaling, whereas distinct signals regulate NPY and the control of fertility, growth and glucose homeostasis. Involved in the regulation of counter-regulatory response to hypoglycemia by inhibiting neurons of the parabrachial nucleus. Has a specific effect on T lymphocyte responses, differentially regulating the proliferation of naive and memory T -ells. Leptin increases Th1 and suppresses Th2 cytokine production. In terms of biological role, may transport LEP across the blood-brain barrier. Binds LEP and mediates LEP endocytosis. Does not induce phosphorylation of and activate STAT3. Functionally, antagonizes Isoform A and isoform B-mediated LEP binding and endocytosis. The polypeptide is Leptin receptor (LEPR) (Homo sapiens (Human)).